Consider the following 339-residue polypeptide: tRNA N6-adenosine threonylcarbamoyltransferase (339 aa).

Fe cation contacts are provided by H107 and H111. Residues 129–133 (LVSGG), D162, G175, and N279 each bind substrate. D307 lines the Fe cation pocket.

Belongs to the KAE1 / TsaD family. Fe(2+) serves as cofactor.

It localises to the cytoplasm. The catalysed reaction is L-threonylcarbamoyladenylate + adenosine(37) in tRNA = N(6)-L-threonylcarbamoyladenosine(37) in tRNA + AMP + H(+). Required for the formation of a threonylcarbamoyl group on adenosine at position 37 (t(6)A37) in tRNAs that read codons beginning with adenine. Is involved in the transfer of the threonylcarbamoyl moiety of threonylcarbamoyl-AMP (TC-AMP) to the N6 group of A37, together with TsaE and TsaB. TsaD likely plays a direct catalytic role in this reaction. This Campylobacter curvus (strain 525.92) protein is tRNA N6-adenosine threonylcarbamoyltransferase.